A 547-amino-acid chain; its full sequence is Immunoglobulin epsilon heavy chain (547 aa).

A Pyrrolidone carboxylic acid modification is found at Gln-1. Ig-like domains are found at residues 1-120 (QVQL…TEVT), 130-223 (PSVF…KTFS), 232-329 (PTVK…KKCA), 333-437 (PRGV…TKTS), and 443-542 (PEVY…RAVS). Residues 1-124 (QVQLVQSGAE…EGTEVTYTVS (124 aa)) form a variable (V) domain, involved in antigen recognition region. Disulfide bonds link Cys-22–Cys-96, Cys-139–Cys-225, Cys-153–Cys-207, Cys-254–Cys-312, Cys-358–Cys-418, and Cys-464–Cys-524. Positions 125-547 (GAWTLPSVFP…QRAVSVNPGK (423 aa)) are constant (C) domain. 7 N-linked (GlcNAc...) asparagine glycosylation sites follow: Asn-145, Asn-173, Asn-219, Asn-265, Asn-371, Asn-383, and Asn-394.

Immunoglobulins are composed of two identical heavy chains and two identical light chains; disulfide-linked.

It localises to the secreted. Its subcellular location is the cell membrane. Immunoglobulins, also known as antibodies, are membrane-bound or secreted glycoproteins produced by B lymphocytes. In the recognition phase of humoral immunity, the membrane-bound immunoglobulins serve as receptors which, upon binding of a specific antigen, trigger the clonal expansion and differentiation of B lymphocytes into immunoglobulins-secreting plasma cells. Secreted immunoglobulins mediate the effector phase of humoral immunity, which results in the elimination of bound antigens. The antigen binding site is formed by the variable domain of one heavy chain, together with that of its associated light chain. Thus, each immunoglobulin has two antigen binding sites with remarkable affinity for a particular antigen. The variable domains are assembled by a process called V-(D)-J rearrangement and can then be subjected to somatic hypermutations which, after exposure to antigen and selection, allow affinity maturation for a particular antigen. This chain is Immunoglobulin epsilon heavy chain, found in Homo sapiens (Human).